A 397-amino-acid polypeptide reads, in one-letter code: MSKEKFERTKPHVNIGTIGHVDHGKTTLTAAITMVLAKEGKASATKYDEIDKAPEEKERGITINTAHVEYETEVRHYAHVDCPGHADYVKNMITGAAQMDGAILVVSAADGPMPQTREHILLASRVGVQYIVVFLNKSDQVDDPELIELVEMEVRELLSEYGFPGDDVPIIVGSALKVIENPEDAEATKCIYELMEAVDTYIPTPERPVDKPFLMPIEDVFTITGRGTVATGRVESGVLKIGDEVEIVGLKEEKKKTVCTGVEMFRKLLDQAMAGDNIGALLRGIQREEIERGQVLSKPGSVKPHKKFVGQVYVLKKEEGGRHTPFFNGYRPQFYFRTTDVTGSISLPEGVEMVMPGDHIDMNVELITPVAMHEGLRFAIREGGRTVGSGVVTTVSE.

A tr-type G domain is found at 10–206; sequence KPHVNIGTIG…AVDTYIPTPE (197 aa). Residues 19 to 26 are G1; that stretch reads GHVDHGKT. 19–26 serves as a coordination point for GTP; sequence GHVDHGKT. Mg(2+) is bound at residue Thr-26. Residues 60-64 form a G2 region; sequence GITIN. Positions 81–84 are G3; the sequence is DCPG. Residues 81–85 and 136–139 each bind GTP; these read DCPGH and NKSD. The G4 stretch occupies residues 136-139; sequence NKSD. A G5 region spans residues 174 to 176; the sequence is SAL.

It belongs to the TRAFAC class translation factor GTPase superfamily. Classic translation factor GTPase family. EF-Tu/EF-1A subfamily. Monomer.

The protein localises to the cytoplasm. It catalyses the reaction GTP + H2O = GDP + phosphate + H(+). Its function is as follows. GTP hydrolase that promotes the GTP-dependent binding of aminoacyl-tRNA to the A-site of ribosomes during protein biosynthesis. The polypeptide is Elongation factor Tu (Clostridium kluyveri (strain ATCC 8527 / DSM 555 / NBRC 12016 / NCIMB 10680 / K1)).